The chain runs to 560 residues: Glycolate permease GlcA (560 aa).

The Cytoplasmic portion of the chain corresponds to 1 to 13; it reads MVTWTQMYMPMGG. The helical transmembrane segment at 14–34 threads the bilayer; that stretch reads LGLSALVALIPIIFFFVALAV. Topologically, residues 35–41 are periplasmic; sequence LRLKGHV. Residues 42 to 62 form a helical membrane-spanning segment; sequence AGAITLILSILIAIFAFKMPI. The Cytoplasmic portion of the chain corresponds to 63–69; sequence DMAFAAA. Residues 70–90 form a helical membrane-spanning segment; that stretch reads GYGFIYGLWPIAWIIVAAVFL. The Periplasmic segment spans residues 91–130; that stretch reads YKLTVASGQFDIIRSSVISITDDQRLQVLLIGFSFGALLE. Residues 131–151 form a helical membrane-spanning segment; that stretch reads GAAGFGAPVAITGALLVGLGF. The Cytoplasmic portion of the chain corresponds to 152 to 158; the sequence is KPLYAAG. The helical transmembrane segment at 159–179 threads the bilayer; that stretch reads LCLIANTAPVAFGALGVPILV. The Periplasmic segment spans residues 180-199; that stretch reads AGQVTGIDPFHIGAMAGRQL. Residues 200–220 form a helical membrane-spanning segment; it reads PFLSVLVPFWLVAMMDGWKGV. The Cytoplasmic portion of the chain corresponds to 221-225; sequence KETWP. Residues 226-246 form a helical membrane-spanning segment; that stretch reads AALVAGGSFAVTQFFTSNYIG. Residues 247 to 248 are Periplasmic-facing; the sequence is PE. A helical transmembrane segment spans residues 249-269; that stretch reads LPDITSALVSIVSLALFLKVW. At 270-313 the chain is on the cytoplasmic side; it reads RPKNTETAISMGQSAGAMVVNKPSSGGPVPSEYSLGQIIRAWSP. Residues 314–334 form a helical membrane-spanning segment; the sequence is FLILTVLVTIWTMKPFKALFA. The Periplasmic portion of the chain corresponds to 335 to 378; that stretch reads PGGAFYSLVINFQIPHLHQQVLKAAPIVAQPTPMDAVFKFDPLS. A helical membrane pass occupies residues 379–399; sequence AGGTAIFIAAIISIFILGVGI. Topologically, residues 400–408 are cytoplasmic; sequence KKGIGVFAE. A helical membrane pass occupies residues 409 to 429; sequence TLISLKWPILSIGMVLAFAFV. Residues 430-438 are Periplasmic-facing; that stretch reads TNYSGMSTT. A helical transmembrane segment spans residues 439 to 459; the sequence is LALVLAGTGVMFPFFSPFLGW. At 460–536 the chain is on the cytoplasmic side; it reads LGVFLTGSDT…ELFRYTVKHS (77 aa). A helical membrane pass occupies residues 537 to 557; it reads LIFASVIGIITLLQAYVFTGM. Topologically, residues 558 to 560 are periplasmic; it reads LVS.

The protein belongs to the lactate permease family.

It localises to the cell inner membrane. The catalysed reaction is glycolate(in) + H(+)(in) = glycolate(out) + H(+)(out). It catalyses the reaction (S)-lactate(in) + H(+)(in) = (S)-lactate(out) + H(+)(out). It carries out the reaction (R)-lactate(in) + H(+)(in) = (R)-lactate(out) + H(+)(out). Its activity is regulated as follows. Inhibited by the proton ionophore carbonyl cyanide m-chlorophenylhydrazone (CCCP). In terms of biological role, uptake of glycolate across the membrane. Can also transport L-lactate and D-lactate. Seems to be driven by a proton motive force. The protein is Glycolate permease GlcA of Escherichia coli (strain K12).